The sequence spans 619 residues: Pentatricopeptide repeat-containing protein At3g22470, mitochondrial (619 aa).

The transit peptide at 1–28 (MIQRLIPLNRKASNFTQILEKGTSLLHY) directs the protein to the mitochondrion. PPR repeat units follow at residues 69-103 (TPIDFNRLCSAVARTKQYDLVLGFCKGMELNGIEH), 104-138 (DMYTMTIMINCYCRKKKLLFAFSVLGRAWKLGYEP), 139-173 (DTITFSTLVNGFCLEGRVSEAVALVDRMVEMKQRP), 174-208 (DLVTVSTLINGLCLKGRVSEALVLIDRMVEYGFQP), 209-243 (DEVTYGPVLNRLCKSGNSALALDLFRKMEERNIKA), 244-278 (SVVQYSIVIDSLCKDGSFDDALSLFNEMEMKGIKA), 279-313 (DVVTYSSLIGGLCNDGKWDDGAKMLREMIGRNIIP), 314-348 (DVVTFSALIDVFVKEGKLLEAKELYNEMITRGIAP), 349-383 (DTITYNSLIDGFCKENCLHEANQMFDLMVSKGCEP), 384-418 (DIVTYSILINSYCKAKRVDDGMRLFREISSKGLIP), 419-453 (NTITYNTLVLGFCQSGKLNAAKELFQEMVSRGVPP), 454-488 (SVVTYGILLDGLCDNGELNKALEIFEKMQKSRMTL), 489-523 (GIGIYNIIIHGMCNASKVDDAWSLFCSLSDKGVKP), 524-558 (DVVTYNVMIGGLCKKGSLSEADMLFRKMKEDGCTP), and 559-593 (DDFTYNILIRAHLGGSGLISSVELIEEMKVCGFSA).

Belongs to the PPR family. P subfamily.

The protein resides in the mitochondrion. The sequence is that of Pentatricopeptide repeat-containing protein At3g22470, mitochondrial from Arabidopsis thaliana (Mouse-ear cress).